The sequence spans 230 residues: MGQQISDQTQLVINKLPEKVAKHVTLVRESGSLTYEEFLGRVAELNDVTAKVASGQEKHLLFEVQPGSDSSAFWKVVVRVVCTKINKSSGIVEASRIMNLYQFIQLYKDITSQAAGVLAQSSTSEEPDENSSSVTSCQASLWMGRVKQLTDEEECCICMDGRADLILPCAHSFCQKCIDKWSDRHRNCPICRLQMTGANESWVVSDAPTEDDMANYILNMADEAGQPHRP.

G2 carries N-myristoyl glycine lipidation. The RING-type zinc finger occupies 155-192 (CCICMDGRADLILPCAHSFCQKCIDKWSDRHRNCPICR).

It localises to the membrane. May be involved in spermatogenesis. The chain is RING finger protein 141 (RNF141) from Pongo abelii (Sumatran orangutan).